Here is a 149-residue protein sequence, read N- to C-terminus: Flagellar assembly factor FliW (149 aa).

This sequence belongs to the FliW family. In terms of assembly, interacts with translational regulator CsrA and flagellin(s).

Its subcellular location is the cytoplasm. Functionally, acts as an anti-CsrA protein, binds CsrA and prevents it from repressing translation of its target genes, one of which is flagellin. Binds to flagellin and participates in the assembly of the flagellum. This is Flagellar assembly factor FliW from Thermotoga sp. (strain RQ2).